The following is a 364-amino-acid chain: 3-isopropylmalate dehydrogenase (364 aa).

79 to 92 (GPKWEHLPPDQQPE) is a binding site for NAD(+). Substrate-binding residues include Arg-100, Arg-110, Arg-139, and Asp-228. 3 residues coordinate Mg(2+): Asp-228, Asp-252, and Asp-256. 286-298 (GSAPDIAGKNIAN) provides a ligand contact to NAD(+).

It belongs to the isocitrate and isopropylmalate dehydrogenases family. LeuB type 1 subfamily. Homodimer. Mg(2+) is required as a cofactor. Requires Mn(2+) as cofactor.

The protein resides in the cytoplasm. It catalyses the reaction (2R,3S)-3-isopropylmalate + NAD(+) = 4-methyl-2-oxopentanoate + CO2 + NADH. It functions in the pathway amino-acid biosynthesis; L-leucine biosynthesis; L-leucine from 3-methyl-2-oxobutanoate: step 3/4. Its function is as follows. Catalyzes the oxidation of 3-carboxy-2-hydroxy-4-methylpentanoate (3-isopropylmalate) to 3-carboxy-4-methyl-2-oxopentanoate. The product decarboxylates to 4-methyl-2 oxopentanoate. This is 3-isopropylmalate dehydrogenase from Escherichia coli (strain UTI89 / UPEC).